The sequence spans 299 residues: MANFPASLLILNGKSADNQPLREAITLLRDEGIQIHVRVTWEKGDAQRYVDEARRLGVETVIAGGGDGTINEVSTALIQIRDGVAPALGLLPLGTANDFATSAGIPEALDKALKLAIAGNAMEIDMAMVNDKTCFINMATGGFGTRITTETPEKLKAALGGVSYLIHGLMRMDTLTPDRCEIRGENFHWQGDALVIGIGNGRQAGGGQQLCPTALINDGLLQLRIFTGEELLPALFSTLTQSDDNPNIIDGASAWFDIHAPHEITFNLDGEPLSGQEFHIEVLPGALRCRLPPDCPLLR.

Residues 2–133 form the DAGKc domain; that stretch reads ANFPASLLIL…IDMAMVNDKT (132 aa). ATP contacts are provided by residues threonine 40, 66–72, and threonine 95; that span reads GDGTINE. 3 residues coordinate Mg(2+): leucine 215, aspartate 218, and leucine 220. The active-site Proton acceptor is glutamate 271.

It belongs to the diacylglycerol/lipid kinase family. YegS lipid kinase subfamily. Requires Mg(2+) as cofactor. The cofactor is Ca(2+).

Its subcellular location is the cytoplasm. In terms of biological role, probably phosphorylates lipids; the in vivo substrate is unknown. In Salmonella choleraesuis (strain SC-B67), this protein is Probable lipid kinase YegS.